A 195-amino-acid chain; its full sequence is Acireductone dioxygenase 2 (195 aa).

Fe(2+) contacts are provided by His94, His96, Glu100, and His139. The Ni(2+) site is built by His94, His96, Glu100, and His139.

The protein belongs to the acireductone dioxygenase (ARD) family. Fe(2+) serves as cofactor. Requires Ni(2+) as cofactor.

The protein resides in the cytoplasm. It localises to the nucleus. The catalysed reaction is 1,2-dihydroxy-5-(methylsulfanyl)pent-1-en-3-one + O2 = 4-methylsulfanyl-2-oxobutanoate + formate + 2 H(+). It carries out the reaction 1,2-dihydroxy-5-(methylsulfanyl)pent-1-en-3-one + O2 = 3-(methylsulfanyl)propanoate + CO + formate + 2 H(+). It functions in the pathway amino-acid biosynthesis; L-methionine biosynthesis via salvage pathway; L-methionine from S-methyl-5-thio-alpha-D-ribose 1-phosphate: step 5/6. Functionally, catalyzes 2 different reactions between oxygen and the acireductone 1,2-dihydroxy-3-keto-5-methylthiopentene (DHK-MTPene) depending upon the metal bound in the active site. Fe-containing acireductone dioxygenase (Fe-ARD) produces formate and 2-keto-4-methylthiobutyrate (KMTB), the alpha-ketoacid precursor of methionine in the methionine recycle pathway. Ni-containing acireductone dioxygenase (Ni-ARD) produces methylthiopropionate, carbon monoxide and formate, and does not lie on the methionine recycle pathway. This chain is Acireductone dioxygenase 2, found in Physcomitrium patens (Spreading-leaved earth moss).